The chain runs to 120 residues: NAD(P)H-quinone oxidoreductase subunit 3, chloroplastic (120 aa).

The next 3 helical transmembrane spans lie at 11 to 31 (VVFFIVACLVPILALSGSKLI), 65 to 85 (FALIFVIFDVETLFLYPWAIV), and 89 to 109 (LGITAFLETLIFLSILIIGLV).

Belongs to the complex I subunit 3 family. As to quaternary structure, NDH is composed of at least 16 different subunits, 5 of which are encoded in the nucleus.

Its subcellular location is the plastid. It is found in the chloroplast thylakoid membrane. It carries out the reaction a plastoquinone + NADH + (n+1) H(+)(in) = a plastoquinol + NAD(+) + n H(+)(out). The catalysed reaction is a plastoquinone + NADPH + (n+1) H(+)(in) = a plastoquinol + NADP(+) + n H(+)(out). Its function is as follows. NDH shuttles electrons from NAD(P)H:plastoquinone, via FMN and iron-sulfur (Fe-S) centers, to quinones in the photosynthetic chain and possibly in a chloroplast respiratory chain. The immediate electron acceptor for the enzyme in this species is believed to be plastoquinone. Couples the redox reaction to proton translocation, and thus conserves the redox energy in a proton gradient. The sequence is that of NAD(P)H-quinone oxidoreductase subunit 3, chloroplastic from Mesostigma viride (Green alga).